The primary structure comprises 89 residues: MSITKEKKTELITRYGGAATNTGLPEVEIAIMTERINNLTEHLKVHKKDNHTRSGLLKLVGKRKRLLNYLTKVDVLRYRKIIAELNIRK.

The protein belongs to the universal ribosomal protein uS15 family. As to quaternary structure, part of the 30S ribosomal subunit. Forms a bridge to the 50S subunit in the 70S ribosome, contacting the 23S rRNA.

In terms of biological role, one of the primary rRNA binding proteins, it binds directly to 16S rRNA where it helps nucleate assembly of the platform of the 30S subunit by binding and bridging several RNA helices of the 16S rRNA. Its function is as follows. Forms an intersubunit bridge (bridge B4) with the 23S rRNA of the 50S subunit in the ribosome. The chain is Small ribosomal subunit protein uS15 from Chloroherpeton thalassium (strain ATCC 35110 / GB-78).